Consider the following 1034-residue polypeptide: Presequence protease, mitochondrial (1034 aa).

A mitochondrion-targeting transit peptide spans 1 to 26 (MLKTRLKQSRAISRVVRRYACSHPIS). Residue histidine 97 participates in Zn(2+) binding. The active-site Proton acceptor is glutamate 100. Zn(2+) is bound at residue histidine 101. Residue glutamate 173 is part of the active site. Zn(2+) is bound at residue glutamate 198.

The protein belongs to the peptidase M16 family. PreP subfamily. In terms of assembly, monomer and homodimer; homodimerization is induced by binding of the substrate. It depends on Zn(2+) as a cofactor.

The protein resides in the mitochondrion intermembrane space. The protein localises to the mitochondrion matrix. In terms of biological role, degrades mitochondrial transit peptides after their cleavage in the intermembrane space or in the matrix, and presequence peptides; clearance of these peptides is required to keep the presequence processing machinery running. Preferentially cleaves the N-terminal side of paired basic amino acid residues. Also degrades other unstructured peptides. May function as an ATP-dependent peptidase as opposed to a metalloendopeptidase. The polypeptide is Presequence protease, mitochondrial (CYM1) (Candida albicans (strain SC5314 / ATCC MYA-2876) (Yeast)).